A 631-amino-acid chain; its full sequence is MATWNRPHPRQPVAPEPAAEDDSQQPLGRELSEANRFAYAALCGFSLSQLFPEPEQSSFCTEFVTGLVKWLHLSESVLPTIMAFASGLGGEGADIFAQTLLQDPILRDNPSAVSQDLLSFSLKNGHYDARARVLVCHVTSLLQVPMEELDILEEVFLESLKDAKEEESETAEASRKRKEKRRKWKRYLLIGLATVGGGTVIGVTGGLAAPLVAAGAATIIGSAGAAALGSVAGIAVMTSLFGAAGAGLTGYKMKKRVGAIEEFMFLPLTEGRQLHITIAITGWLGSGRYRTFNAPWMALARSQEQYCLAWEAKYLMELGNALETILSGLANMVAQEALKYTVLSGIVAALTWPASLLSVANVIDNPWGVCLHRSAEVGKHLAHILLSRQQGRRPVTLIGFSLGARVIYFCLQEMAQEQDCQGIIEDVVLLGAPVEGDPKHWEPFRNVVSGRIINGYCRGDWLLSFVYRTSSVQLRVAGLQPVLLQDRRMENVDLTSVVNGHLDYAKQMDAILKVVGIRTKPGWREKGLPLAPGSLPQEEPLQTAIVSTDEIILQDGQSQGPASEDSLKTTIPSSASQAQMPAGLNQSTEDSLSTAAAPAEGHLICSHGVGPNPLGCPDCTHGTQESCTELD.

The interval 1 to 27 (MATWNRPHPRQPVAPEPAAEDDSQQPL) is disordered. A coiled-coil region spans residues 156–183 (FLESLKDAKEEESETAEASRKRKEKRRK). 3 helical membrane-spanning segments follow: residues 200–220 (VIGV…ATII), 228–248 (LGSV…GAGL), and 343–363 (LSGI…ANVI). Residues 555–595 (DGQSQGPASEDSLKTTIPSSASQAQMPAGLNQSTEDSLSTA) are disordered. A compositionally biased stretch (polar residues) spans 568–594 (KTTIPSSASQAQMPAGLNQSTEDSLST).

This sequence belongs to the TMCO4 family.

The protein localises to the membrane. This Mus musculus (Mouse) protein is Transmembrane and coiled-coil domain-containing protein 4 (Tmco4).